Here is a 441-residue protein sequence, read N- to C-terminus: Vacuolar cation/proton exchanger 2 (441 aa).

Residues 1 to 69 (MSCCKVPVLI…PKNSVLNSIK (69 aa)) lie on the Cytoplasmic side of the membrane. Residues 70-90 (IVIFCNKLNLLLPFGPLAILV) form a helical membrane-spanning segment. At 91-97 (HYMIDSK) the chain is on the extracellular side. A helical transmembrane segment spans residues 98-118 (GWVFLLTLVGITPLAERLGYA). At 119 to 129 (TEQLACYTGPT) the chain is on the cytoplasmic side. The helical transmembrane segment at 130–150 (VGGLLNATFGNVTELIISIFA) threads the bilayer. The segment at 139–174 (GNVTELIISIFALKNGMIRVVQLTLLGSILSNMLLV) is cation selection. The Extracellular portion of the chain corresponds to 151-166 (LKNGMIRVVQLTLLGS). The helical transmembrane segment at 167–187 (ILSNMLLVLGCAFFCGGLVFY) threads the bilayer. Topologically, residues 188-196 (QKDQVFDKG) are cytoplasmic. The chain crosses the membrane as a helical span at residues 197–217 (IATVNSGLLLMAVMGILFPAV). Residues 218–231 (LHYTHSEVHAGSSE) are Extracellular-facing. A helical membrane pass occupies residues 232-252 (LALSRFSSCIMLIAYAAYLFF). The Cytoplasmic segment spans residues 253 to 286 (QLKSQSNSYSPLDEESNQNEETSAEDEDPEISKW). The helical transmembrane segment at 287–307 (EAIIWLSILTAWVSLLSGYLV) threads the bilayer. The Extracellular segment spans residues 308–311 (DAIE). Residues 312 to 332 (GASVSWNIPIAFISTILLPIV) form a helical membrane-spanning segment. Topologically, residues 333–354 (GNAAEHAGAIMFAMKDKLDLSL) are cytoplasmic. The cation selection stretch occupies residues 333-368 (GNAAEHAGAIMFAMKDKLDLSLGVAIGSSIQISMFA). A helical transmembrane segment spans residues 355–375 (GVAIGSSIQISMFAVPFCVVI). Topologically, residues 376-384 (GWMMGQQMD) are extracellular. A helical membrane pass occupies residues 385–405 (LNFQLFETAMLFITVIVVAFF). Over 406–412 (LQEGSSN) the chain is Cytoplasmic. Residues 413–433 (YFKGLMLILCYLIVAASFFVH) form a helical membrane-spanning segment. The Extracellular segment spans residues 434 to 441 (EDPHQDGI).

The protein belongs to the Ca(2+):cation antiporter (CaCA) (TC 2.A.19) family. Cation/proton exchanger (CAX) subfamily.

The protein resides in the vacuole membrane. Inhibited by excess of Ca(2+) and Cd(2+), Mn(2+), and Zn(2+). Vacuolar cation/proton exchanger (CAX). Translocates Ca(2+) and other metal ions into vacuoles using the proton gradient formed by H(+)-ATPase and H(+)-pyrophosphatase. This is Vacuolar cation/proton exchanger 2 (CAX2) from Arabidopsis thaliana (Mouse-ear cress).